The primary structure comprises 177 residues: Large ribosomal subunit protein uL6 (177 aa).

It belongs to the universal ribosomal protein uL6 family. Part of the 50S ribosomal subunit.

In terms of biological role, this protein binds to the 23S rRNA, and is important in its secondary structure. It is located near the subunit interface in the base of the L7/L12 stalk, and near the tRNA binding site of the peptidyltransferase center. This chain is Large ribosomal subunit protein uL6, found in Bartonella henselae (strain ATCC 49882 / DSM 28221 / CCUG 30454 / Houston 1) (Rochalimaea henselae).